The chain runs to 456 residues: Heme sensor protein HssS (456 aa).

2 helical membrane passes run 9–29 (IAIYTITVILFSALVSFLFAN) and 164–184 (TFLAVLLICLLGISITLVIAS). The HAMP domain occupies 186 to 238 (YSIIKPIKILKQATERLMHGDFNSPIYQSRHDEIGTLQYRFEAMRQSLKQVDD). The Histidine kinase domain occupies 246 to 456 (NVSHEIKTPL…TFTVTLPETN (211 aa)). Histidine 249 bears the Phosphohistidine; by autocatalysis mark.

Autophosphorylated.

It localises to the cell membrane. It carries out the reaction ATP + protein L-histidine = ADP + protein N-phospho-L-histidine.. Its function is as follows. Member of the two-component regulatory system HssS/HssR involved in intracellular heme homeostasis and tempering of staphylococcal virulence. HssS functions as a heme sensor histidine kinase which is autophosphorylated at a histidine residue and transfers its phosphate group to an aspartate residue of HssR. HssR/HssS activates the expression of hrtAB, an efflux pump, in response to extracellular heme, hemin, hemoglobin or blood. In Staphylococcus haemolyticus (strain JCSC1435), this protein is Heme sensor protein HssS (hssS).